The primary structure comprises 171 residues: Adenine phosphoribosyltransferase (171 aa).

Belongs to the purine/pyrimidine phosphoribosyltransferase family. Homodimer.

The protein localises to the cytoplasm. It carries out the reaction AMP + diphosphate = 5-phospho-alpha-D-ribose 1-diphosphate + adenine. Its pathway is purine metabolism; AMP biosynthesis via salvage pathway; AMP from adenine: step 1/1. Catalyzes a salvage reaction resulting in the formation of AMP, that is energically less costly than de novo synthesis. The sequence is that of Adenine phosphoribosyltransferase from Trichlorobacter lovleyi (strain ATCC BAA-1151 / DSM 17278 / SZ) (Geobacter lovleyi).